Reading from the N-terminus, the 495-residue chain is Alkaline protease 2 (495 aa).

The first 16 residues, methionine 1–alanine 16, serve as a signal peptide directing secretion. The propeptide occupies serine 17–methionine 136. Residues serine 43–methionine 136 form the Inhibitor I9 domain. The 307-residue stretch at proline 146–isoleucine 452 folds into the Peptidase S8 domain. Residues aspartate 182 and histidine 214 each act as charge relay system in the active site. A glycan (N-linked (GlcNAc...) asparagine) is linked at asparagine 284. Serine 380 functions as the Charge relay system in the catalytic mechanism. N-linked (GlcNAc...) asparagine glycosylation is found at asparagine 447 and asparagine 460.

The protein belongs to the peptidase S8 family.

The catalysed reaction is Hydrolysis of proteins with broad specificity, and of Bz-Arg-OEt &gt; Ac-Tyr-OEt. Does not hydrolyze peptide amides.. Its function is as follows. Alkaline protease that allows assimilation of proteinaceous substrates. Acts as a significant virulence factor in invasive aspergillosis. Required for regular sporulation. This Aspergillus fumigatus (strain CBS 144.89 / FGSC A1163 / CEA10) (Neosartorya fumigata) protein is Alkaline protease 2 (alp2).